Here is a 376-residue protein sequence, read N- to C-terminus: Immunoglobulin G-binding protein H (376 aa).

The first 41 residues, 1–41 (MTRQQTKKNYSLRKLKTGTASVAVALTVLGAGFANQTTVKA), serve as a signal peptide directing secretion. Residues 69-271 (TSLENEKLKS…AAKKELEANH (203 aa)) are disordered. Basic and acidic residues-rich tracts occupy residues 72 to 146 (ENEK…KRYQ), 156 to 203 (ETEK…DKQI), 211 to 245 (LSRD…DKQI), and 253 to 271 (LSRD…EANH). C repeat units follow at residues 153–187 (QQLE…EAEH), 195–229 (QKLK…EANH), and 237–271 (QKLK…EANH). 4 D repeats span residues 272–277 (QKLEAE), 278–283 (AKALKE), 286–291 (AKQAEE), and 293–298 (AKLRAG). Residues 292-348 (LAKLRAGKASDSQTPDTKPGNKAVPGKGQAPQAGTKPNQNKAPMKETKRQLPSTGET) form a disordered region. The LPXTG sorting signal motif lies at 342–346 (LPSTG). Threonine 345 is modified (pentaglycyl murein peptidoglycan amidated threonine). Residues 346–376 (GETANPFFTAAALTVMATAGVAAVVKRKEEN) constitute a propeptide, removed by sortase.

Belongs to the M protein family.

The protein localises to the secreted. It localises to the cell wall. This Streptococcus pyogenes serotype M1 protein is Immunoglobulin G-binding protein H.